A 566-amino-acid polypeptide reads, in one-letter code: DDB1- and CUL4-associated factor 10 (566 aa).

2 disordered regions span residues Met1 to Ala72 and Thr87 to Leu123. A phosphoserine mark is found at Ser50, Ser57, Ser67, Ser96, Ser99, and Ser100. A compositionally biased stretch (low complexity) spans Thr87 to Ser100. Arg141 is modified (omega-N-methylarginine). WD repeat units follow at residues Arg173 to Thr212, Ala216 to Cys254, Gly258 to Cys297, and Phe303 to Glu342. The segment covering Thr354–Ser374 has biased composition (low complexity). The tract at residues Thr354 to Glu413 is disordered. Ser356 is subject to Phosphoserine. Basic and acidic residues predominate over residues His377–Met388. WD repeat units follow at residues Asp415–Ala455, Val477–Val515, and Ser533–Phe566.

It belongs to the WD repeat DCAF10 family. In terms of assembly, interacts with DDB1.

Its pathway is protein modification; protein ubiquitination. Its function is as follows. May function as a substrate receptor for CUL4-DDB1 E3 ubiquitin-protein ligase complex. This Mus musculus (Mouse) protein is DDB1- and CUL4-associated factor 10 (Dcaf10).